The following is a 285-amino-acid chain: Probable endonuclease 4 (285 aa).

Residues histidine 69, histidine 109, glutamate 145, aspartate 179, histidine 182, histidine 216, aspartate 229, histidine 231, and glutamate 261 each contribute to the Zn(2+) site.

The protein belongs to the AP endonuclease 2 family. The cofactor is Zn(2+).

The catalysed reaction is Endonucleolytic cleavage to 5'-phosphooligonucleotide end-products.. Functionally, endonuclease IV plays a role in DNA repair. It cleaves phosphodiester bonds at apurinic or apyrimidinic (AP) sites, generating a 3'-hydroxyl group and a 5'-terminal sugar phosphate. The polypeptide is Probable endonuclease 4 (Salmonella arizonae (strain ATCC BAA-731 / CDC346-86 / RSK2980)).